An 812-amino-acid chain; its full sequence is Lon protease (812 aa).

A Lon N-terminal domain is found at 22–215 (YAVLPLRDIV…KALSFMEAEI (194 aa)). 367 to 374 (GPPGVGKT) provides a ligand contact to ATP. Positions 602–783 (EDQVGVVTGL…GEVLKHTLVR (182 aa)) constitute a Lon proteolytic domain. Catalysis depends on residues S689 and K732. A disordered region spans residues 787–812 (PIEWTEQENPTAVPPVEDEAGASLAH).

It belongs to the peptidase S16 family. As to quaternary structure, homohexamer. Organized in a ring with a central cavity.

It localises to the cytoplasm. It carries out the reaction Hydrolysis of proteins in presence of ATP.. Functionally, ATP-dependent serine protease that mediates the selective degradation of mutant and abnormal proteins as well as certain short-lived regulatory proteins. Required for cellular homeostasis and for survival from DNA damage and developmental changes induced by stress. Degrades polypeptides processively to yield small peptide fragments that are 5 to 10 amino acids long. Binds to DNA in a double-stranded, site-specific manner. This chain is Lon protease, found in Brucella suis biovar 1 (strain 1330).